Here is a 198-residue protein sequence, read N- to C-terminus: Imidazoleglycerol-phosphate dehydratase (198 aa).

This sequence belongs to the imidazoleglycerol-phosphate dehydratase family.

It localises to the cytoplasm. The enzyme catalyses D-erythro-1-(imidazol-4-yl)glycerol 3-phosphate = 3-(imidazol-4-yl)-2-oxopropyl phosphate + H2O. Its pathway is amino-acid biosynthesis; L-histidine biosynthesis; L-histidine from 5-phospho-alpha-D-ribose 1-diphosphate: step 6/9. This chain is Imidazoleglycerol-phosphate dehydratase, found in Agrobacterium fabrum (strain C58 / ATCC 33970) (Agrobacterium tumefaciens (strain C58)).